The primary structure comprises 492 residues: uncharacterized protein (492 aa).

Transmembrane regions (helical) follow at residues 16–36, 39–59, 107–127, 133–153, 162–182, 210–230, 243–263, 291–311, 350–370, 394–414, 429–449, and 454–474; these read FIAF…VMTM, VGPF…GVVL, SFNG…IPVV, IIIG…FISL, AIFY…ILGI, IIFI…LASI, FLIA…IISG, LVGG…NSLA, VLIS…IPFL, MAAA…FMIF, VSYV…LFPF, and VFNT…VGFF.

To M.genitalium MG225.

The protein localises to the cell membrane. This is an uncharacterized protein from Mycoplasma genitalium (strain ATCC 33530 / DSM 19775 / NCTC 10195 / G37) (Mycoplasmoides genitalium).